We begin with the raw amino-acid sequence, 461 residues long: Argininosuccinate lyase (461 aa).

Belongs to the lyase 1 family. Argininosuccinate lyase subfamily.

The protein localises to the cytoplasm. It catalyses the reaction 2-(N(omega)-L-arginino)succinate = fumarate + L-arginine. Its pathway is amino-acid biosynthesis; L-arginine biosynthesis; L-arginine from L-ornithine and carbamoyl phosphate: step 3/3. The chain is Argininosuccinate lyase from Syntrophotalea carbinolica (strain DSM 2380 / NBRC 103641 / GraBd1) (Pelobacter carbinolicus).